The sequence spans 235 residues: Venom metalloproteinase antarease-like TserMP_B (235 aa).

The region spanning Ile-4–Cys-233 is the Peptidase M12B domain. An intrachain disulfide couples Cys-137 to Cys-228. His-161 provides a ligand contact to Zn(2+). Glu-162 is a catalytic residue. The Zn(2+) site is built by His-165 and His-171.

The protein belongs to the venom metalloproteinase (M12B) family. Zn(2+) is required as a cofactor. As to expression, expressed by the venom gland.

Its subcellular location is the secreted. With respect to regulation, inhibited by EDTA. Acts as a metalloprotease. Penetrates intact tissue and specifically cleaves the vesicle-associated membrane protein 2 (VAMP2) (part of the SNARE complex) involved in pancreatic secretion, thus disrupting the normal vesicular traffic. This is Venom metalloproteinase antarease-like TserMP_B from Tityus serrulatus (Brazilian scorpion).